The sequence spans 257 residues: Putative aldolase class 2 protein CC_1201 (257 aa).

Residues His114, His116, and His177 each contribute to the Zn(2+) site.

Belongs to the aldolase class II family. Zn(2+) serves as cofactor.

The sequence is that of Putative aldolase class 2 protein CC_1201 from Caulobacter vibrioides (strain ATCC 19089 / CIP 103742 / CB 15) (Caulobacter crescentus).